We begin with the raw amino-acid sequence, 242 residues long: 1-(5-phosphoribosyl)-5-[(5-phosphoribosylamino)methylideneamino] imidazole-4-carboxamide isomerase (242 aa).

Asp10 functions as the Proton acceptor in the catalytic mechanism. Asp131 acts as the Proton donor in catalysis.

The protein belongs to the HisA/HisF family.

Its subcellular location is the cytoplasm. It carries out the reaction 1-(5-phospho-beta-D-ribosyl)-5-[(5-phospho-beta-D-ribosylamino)methylideneamino]imidazole-4-carboxamide = 5-[(5-phospho-1-deoxy-D-ribulos-1-ylimino)methylamino]-1-(5-phospho-beta-D-ribosyl)imidazole-4-carboxamide. It participates in amino-acid biosynthesis; L-histidine biosynthesis; L-histidine from 5-phospho-alpha-D-ribose 1-diphosphate: step 4/9. The sequence is that of 1-(5-phosphoribosyl)-5-[(5-phosphoribosylamino)methylideneamino] imidazole-4-carboxamide isomerase from Bifidobacterium animalis subsp. lactis (strain AD011).